A 136-amino-acid polypeptide reads, in one-letter code: Large ribosomal subunit protein uL16 (136 aa).

The protein belongs to the universal ribosomal protein uL16 family. As to quaternary structure, part of the 50S ribosomal subunit.

Binds 23S rRNA and is also seen to make contacts with the A and possibly P site tRNAs. This Rickettsia prowazekii (strain Madrid E) protein is Large ribosomal subunit protein uL16.